The chain runs to 560 residues: Phenylalanine--tRNA ligase beta subunit (560 aa).

In terms of domain architecture, B5 spans 279–354 (LTPKEFEVDL…IAYGYNNIEP (76 aa)). The Mg(2+) site is built by Asp332, Asp338, Glu341, and Asp342.

The protein belongs to the phenylalanyl-tRNA synthetase beta subunit family. Type 2 subfamily. As to quaternary structure, tetramer of two alpha and two beta subunits. Mg(2+) serves as cofactor.

The protein localises to the cytoplasm. It catalyses the reaction tRNA(Phe) + L-phenylalanine + ATP = L-phenylalanyl-tRNA(Phe) + AMP + diphosphate + H(+). The polypeptide is Phenylalanine--tRNA ligase beta subunit (Thermococcus sibiricus (strain DSM 12597 / MM 739)).